Consider the following 310-residue polypeptide: Zinc-finger homeodomain protein 3 (310 aa).

The interval 1–64 is disordered; the sequence is MEIASQEDPI…GLGKNHDHSH (64 aa). Over residues 39–56 the composition is skewed to polar residues; sequence LNITTSNPLLVSSNSNGL. Residues 87–136 form a ZF-HD dimerization-type; degenerate zinc finger; that stretch reads YKECLKNHAATMGGNAIDGCGEFMPSGEEGSIEALTCSVCNCHRNFHRRE. Disordered stretches follow at residues 184–220 and 281–310; these read TAGS…YGHN and LSKK…STNP. The span at 190–199 shows a compositional bias: acidic residues; the sequence is ESEDLMEEEG. A DNA-binding region (homeobox) is located at residues 222–285; sequence KKRFRTKFTQ…NNKQNLSKKS (64 aa). Residues 281–291 are compositionally biased toward low complexity; the sequence is LSKKSNNVSNN. Residues 292-310 are compositionally biased toward polar residues; it reads VDLSAGNNDITENLASTNP.

Homo- and heterodimer with other ZFHD proteins. Interacts with MIF2 and MIF3; these interactions prevent nuclear localization and DNA-binding to inhibit transcription regulation activity. Binds to ZHD1, ZHD2 and ZHD11. Interacts with HIPP30. Interacts with KIN10, KIN11 and FLZ8. In terms of tissue distribution, mostly expressed in flowers and inflorescence.

The protein localises to the nucleus. Putative transcription factor. The polypeptide is Zinc-finger homeodomain protein 3 (ZHD3) (Arabidopsis thaliana (Mouse-ear cress)).